A 612-amino-acid chain; its full sequence is MPAYRSRTTTHGRNMAGARGLWRATGVKNSDFGKPIIAIVNSFTQFVPGHVHLKDLGQMVAREVEAAGGIAKEFNTIAVDDGIAMGHDGMLYSLPSRELIADSVEYMVNAHCADAMVCISNCDKITPGMLMAAMRLNIPAIFVSGGPMEAGKVTLGDGRKVSLDLVDAMVAAADDKISDADLAAIEEAACPTCGSCSGMFTANSMNCLSEALGLSLPGNGSTLATHAFRKNLFLEAGRRIVEVTRRHYEQDDASVLPRAIASKAAFLNAMSLDIAMGGSTNTVLHLLAIAQEGGVDFTMDDIDALSRKVPCLCKVAPNTANVHMEDVHRAGGIMAILGELDRAGLIDRDCPTVHAPTIGAAIDQWDIARSNDPQARELFLAAPGGVPTQVAFSQATLWPDLDLDREHGVIRSAKAPFSKDGGLAVLKGNVALDGCIVKTAGVDESILVFSGRAKVYESQDAAVSGILTGKVEAGDVVVIRYEGPKGGPGMQEMLYPTSYLKSKGLGKACALITDGRFSGGTSGLSIGHVSPEAAAGGTIGLVRDGDRIEIDIPNRSIRLAVPEDELAARRAEQDAKGWKPAQPRQRQVSAALKVYAQFAASADKGAVRILPE.

Residue Asp81 coordinates Mg(2+). Cys122 is a binding site for [2Fe-2S] cluster. Mg(2+) is bound by residues Asp123 and Lys124. N6-carboxylysine is present on Lys124. Position 196 (Cys196) interacts with [2Fe-2S] cluster. Residue Glu492 coordinates Mg(2+). Residue Ser518 is the Proton acceptor of the active site.

The protein belongs to the IlvD/Edd family. In terms of assembly, homodimer. The cofactor is [2Fe-2S] cluster. It depends on Mg(2+) as a cofactor.

It carries out the reaction (2R)-2,3-dihydroxy-3-methylbutanoate = 3-methyl-2-oxobutanoate + H2O. The catalysed reaction is (2R,3R)-2,3-dihydroxy-3-methylpentanoate = (S)-3-methyl-2-oxopentanoate + H2O. It participates in amino-acid biosynthesis; L-isoleucine biosynthesis; L-isoleucine from 2-oxobutanoate: step 3/4. It functions in the pathway amino-acid biosynthesis; L-valine biosynthesis; L-valine from pyruvate: step 3/4. In terms of biological role, functions in the biosynthesis of branched-chain amino acids. Catalyzes the dehydration of (2R,3R)-2,3-dihydroxy-3-methylpentanoate (2,3-dihydroxy-3-methylvalerate) into 2-oxo-3-methylpentanoate (2-oxo-3-methylvalerate) and of (2R)-2,3-dihydroxy-3-methylbutanoate (2,3-dihydroxyisovalerate) into 2-oxo-3-methylbutanoate (2-oxoisovalerate), the penultimate precursor to L-isoleucine and L-valine, respectively. The chain is Dihydroxy-acid dehydratase from Paracoccus denitrificans (strain Pd 1222).